A 626-amino-acid chain; its full sequence is DNA primase (626 aa).

The segment at 39-63 (CPFHGEKTPSFSVSPEKQIFHCFGC) adopts a CHC2-type zinc-finger fold. Positions 264–346 (EEITLMEGFM…DVFVLQLPAG (83 aa)) constitute a Toprim domain. Mg(2+)-binding residues include Glu270, Asp314, and Asp316.

This sequence belongs to the DnaG primase family. As to quaternary structure, monomer. Interacts with DnaB. It depends on Zn(2+) as a cofactor. Mg(2+) is required as a cofactor.

It catalyses the reaction ssDNA + n NTP = ssDNA/pppN(pN)n-1 hybrid + (n-1) diphosphate.. Functionally, RNA polymerase that catalyzes the synthesis of short RNA molecules used as primers for DNA polymerase during DNA replication. The chain is DNA primase from Listeria innocua serovar 6a (strain ATCC BAA-680 / CLIP 11262).